A 482-amino-acid polypeptide reads, in one-letter code: Probable cytochrome P450 508D1 (482 aa).

The chain crosses the membrane as a helical span at residues 1 to 21; the sequence is MVYLKNILIFLIIFLINPLVK. Cys-428 serves as a coordination point for heme.

Belongs to the cytochrome P450 family. It depends on heme as a cofactor.

The protein resides in the membrane. In Dictyostelium discoideum (Social amoeba), this protein is Probable cytochrome P450 508D1 (cyp508D1).